A 307-amino-acid chain; its full sequence is Thioredoxin reductase (307 aa).

Position 34–41 (34–41 (ESKAHGGQ)) interacts with FAD. A disulfide bridge links Cys134 with Cys137. 275-284 (DVRAKSFRQV) serves as a coordination point for FAD.

The protein belongs to the class-II pyridine nucleotide-disulfide oxidoreductase family. In terms of assembly, homodimer. FAD is required as a cofactor.

The protein localises to the cytoplasm. It catalyses the reaction [thioredoxin]-dithiol + NADP(+) = [thioredoxin]-disulfide + NADPH + H(+). In Treponema pallidum (strain Nichols), this protein is Thioredoxin reductase (trxB).